Here is a 287-residue protein sequence, read N- to C-terminus: Putative syntaxin-4 (287 aa).

The Cytoplasmic portion of the chain corresponds to 1–262 (MHQISGINAA…NRKWKIVTCI (262 aa)). Positions 65–97 (KCRKLNDHVDKFIAQARGIRRRLADASEELVQY) form a coiled coil. The t-SNARE coiled-coil homology domain maps to 184 to 246 (FDDMKNRATD…EQAQQNVRQA (63 aa)). A helical; Anchor for type IV membrane protein membrane pass occupies residues 263–283 (ALIVLLLVVVYLLSHFLGAII). Over 284–287 (PGWK) the chain is Extracellular.

Belongs to the syntaxin family.

The protein localises to the membrane. Its function is as follows. Potentially involved in docking of synaptic vesicles at presynaptic active zones. This chain is Putative syntaxin-4 (syx-4), found in Caenorhabditis elegans.